We begin with the raw amino-acid sequence, 363 residues long: MTRTVLLRALTKNKFVASNAPRSISISITSLSRCISTLILAEHESGTIKPQTVSTVVAANSLGESSSISLLLAGSGSSLQEAASQAASCHPSVSEVLVADSDKFEYSLAEPWAKLVDFVRQQGDYSHILASSSSFGKNILPRVAALLDVSPITDVVKILGSDQFIRPIYAGNALCTVRYTGAGPCMLTIRSTSFPVTPITANSESKKATVSQIDLSNFEDDSVSKSRYVGRSTQDTERPDLGSARVVITGGRALKSVENFKMIEKLAEKLGGAVGATRAAVDAGYVPNDLQVGQTGKIVAPELYMAFGVSGAIQHLAGIKDSKVIVAVNKDADAPIFQVADYGLVGDLFEVIPELLEKLPEKK.

The N-terminal 24 residues, 1-24 (MTRTVLLRALTKNKFVASNAPRSI), are a transit peptide targeting the mitochondrion. 303-331 (LYMAFGVSGAIQHLAGIKDSKVIVAVNKD) is a binding site for FAD.

Belongs to the ETF alpha-subunit/FixB family. As to quaternary structure, heterodimer of an alpha and a beta subunit. FAD serves as cofactor.

The protein resides in the mitochondrion matrix. In terms of biological role, the electron transfer flavoprotein serves as a specific electron acceptor for several dehydrogenases, including five acyl-CoA dehydrogenases, glutaryl-CoA and sarcosine dehydrogenase. It transfers the electrons to the main mitochondrial respiratory chain via ETF-ubiquinone oxidoreductase (ETF dehydrogenase). Involved in leucine catabolism and in phytol degradation. The chain is Electron transfer flavoprotein subunit alpha, mitochondrial (ETFA) from Arabidopsis thaliana (Mouse-ear cress).